Here is a 188-residue protein sequence, read N- to C-terminus: Elongation factor P (188 aa).

N6-(3,6-diaminohexanoyl)-5-hydroxylysine is present on Lys34.

Belongs to the elongation factor P family. May be beta-lysylated on the epsilon-amino group of Lys-34 by the combined action of EpmA and EpmB, and then hydroxylated on the C5 position of the same residue by EpmC (if this protein is present). Lysylation is critical for the stimulatory effect of EF-P on peptide-bond formation. The lysylation moiety may extend toward the peptidyltransferase center and stabilize the terminal 3-CCA end of the tRNA. Hydroxylation of the C5 position on Lys-34 may allow additional potential stabilizing hydrogen-bond interactions with the P-tRNA.

Its subcellular location is the cytoplasm. The protein operates within protein biosynthesis; polypeptide chain elongation. Involved in peptide bond synthesis. Alleviates ribosome stalling that occurs when 3 or more consecutive Pro residues or the sequence PPG is present in a protein, possibly by augmenting the peptidyl transferase activity of the ribosome. Modification of Lys-34 is required for alleviation. This Vibrio vulnificus (strain CMCP6) protein is Elongation factor P.